A 560-amino-acid chain; its full sequence is Arginine--tRNA ligase (560 aa).

The 'HIGH' region signature appears at 121–131 (PNIAKPFSMGH).

The protein belongs to the class-I aminoacyl-tRNA synthetase family. Monomer.

The protein resides in the cytoplasm. The catalysed reaction is tRNA(Arg) + L-arginine + ATP = L-arginyl-tRNA(Arg) + AMP + diphosphate. The sequence is that of Arginine--tRNA ligase from Exiguobacterium sp. (strain ATCC BAA-1283 / AT1b).